Reading from the N-terminus, the 256-residue chain is Imidazole glycerol phosphate synthase subunit HisF (256 aa).

Active-site residues include D12 and D131.

Belongs to the HisA/HisF family. As to quaternary structure, heterodimer of HisH and HisF.

It localises to the cytoplasm. It carries out the reaction 5-[(5-phospho-1-deoxy-D-ribulos-1-ylimino)methylamino]-1-(5-phospho-beta-D-ribosyl)imidazole-4-carboxamide + L-glutamine = D-erythro-1-(imidazol-4-yl)glycerol 3-phosphate + 5-amino-1-(5-phospho-beta-D-ribosyl)imidazole-4-carboxamide + L-glutamate + H(+). It participates in amino-acid biosynthesis; L-histidine biosynthesis; L-histidine from 5-phospho-alpha-D-ribose 1-diphosphate: step 5/9. Its function is as follows. IGPS catalyzes the conversion of PRFAR and glutamine to IGP, AICAR and glutamate. The HisF subunit catalyzes the cyclization activity that produces IGP and AICAR from PRFAR using the ammonia provided by the HisH subunit. This Pseudomonas putida (strain ATCC 700007 / DSM 6899 / JCM 31910 / BCRC 17059 / LMG 24140 / F1) protein is Imidazole glycerol phosphate synthase subunit HisF.